The sequence spans 143 residues: Large ribosomal subunit protein uL13 (143 aa).

The protein belongs to the universal ribosomal protein uL13 family. Part of the 50S ribosomal subunit.

Its function is as follows. This protein is one of the early assembly proteins of the 50S ribosomal subunit, although it is not seen to bind rRNA by itself. It is important during the early stages of 50S assembly. The chain is Large ribosomal subunit protein uL13 from Variovorax paradoxus (strain S110).